The following is a 170-amino-acid chain: Lipoprotein signal peptidase (170 aa).

The next 3 membrane-spanning stretches (helical) occupy residues 12 to 32 (WYWVVVLVFVADQLSKQWVLA), 67 to 87 (WQRWLFTLVAVGFSTLLTVWL), and 93 to 113 (GLWRLNLAYTLVIGGALGNLI). Active-site residues include D123 and D141. The chain crosses the membrane as a helical span at residues 133–153 (HFPAFNIADSAICVGAGLIIL).

The protein belongs to the peptidase A8 family.

The protein resides in the cell inner membrane. It catalyses the reaction Release of signal peptides from bacterial membrane prolipoproteins. Hydrolyzes -Xaa-Yaa-Zaa-|-(S,diacylglyceryl)Cys-, in which Xaa is hydrophobic (preferably Leu), and Yaa (Ala or Ser) and Zaa (Gly or Ala) have small, neutral side chains.. Its pathway is protein modification; lipoprotein biosynthesis (signal peptide cleavage). This protein specifically catalyzes the removal of signal peptides from prolipoproteins. The protein is Lipoprotein signal peptidase of Shewanella loihica (strain ATCC BAA-1088 / PV-4).